The sequence spans 275 residues: Ribosomal RNA small subunit methyltransferase A (275 aa).

S-adenosyl-L-methionine is bound by residues asparagine 19, leucine 21, glycine 46, glutamate 71, aspartate 94, and asparagine 117.

Belongs to the class I-like SAM-binding methyltransferase superfamily. rRNA adenine N(6)-methyltransferase family. RsmA subfamily.

The protein resides in the cytoplasm. The catalysed reaction is adenosine(1518)/adenosine(1519) in 16S rRNA + 4 S-adenosyl-L-methionine = N(6)-dimethyladenosine(1518)/N(6)-dimethyladenosine(1519) in 16S rRNA + 4 S-adenosyl-L-homocysteine + 4 H(+). Its function is as follows. Specifically dimethylates two adjacent adenosines (A1518 and A1519) in the loop of a conserved hairpin near the 3'-end of 16S rRNA in the 30S particle. May play a critical role in biogenesis of 30S subunits. This chain is Ribosomal RNA small subunit methyltransferase A, found in Burkholderia lata (strain ATCC 17760 / DSM 23089 / LMG 22485 / NCIMB 9086 / R18194 / 383).